A 144-amino-acid polypeptide reads, in one-letter code: Ribonuclease VapC37 (144 aa).

The PINc domain maps to 3–137 (IVDANVLLYA…DFGRFEGVRW (135 aa)). Aspartate 5 and aspartate 90 together coordinate Mg(2+).

It belongs to the PINc/VapC protein family. Mg(2+) serves as cofactor.

It is found in the secreted. In terms of biological role, probable toxic component of a type II toxin-antitoxin (TA) system. An RNase. Upon expression in M.smegmatis inhibits colony formation. The putative cognate antitoxin is VapB37. This is Ribonuclease VapC37 from Mycobacterium tuberculosis (strain ATCC 25618 / H37Rv).